The following is a 564-amino-acid chain: Proline--tRNA ligase (564 aa).

Belongs to the class-II aminoacyl-tRNA synthetase family. ProS type 1 subfamily. As to quaternary structure, homodimer.

The protein resides in the cytoplasm. The catalysed reaction is tRNA(Pro) + L-proline + ATP = L-prolyl-tRNA(Pro) + AMP + diphosphate. In terms of biological role, catalyzes the attachment of proline to tRNA(Pro) in a two-step reaction: proline is first activated by ATP to form Pro-AMP and then transferred to the acceptor end of tRNA(Pro). As ProRS can inadvertently accommodate and process non-cognate amino acids such as alanine and cysteine, to avoid such errors it has two additional distinct editing activities against alanine. One activity is designated as 'pretransfer' editing and involves the tRNA(Pro)-independent hydrolysis of activated Ala-AMP. The other activity is designated 'posttransfer' editing and involves deacylation of mischarged Ala-tRNA(Pro). The misacylated Cys-tRNA(Pro) is not edited by ProRS. This Bacillus subtilis (strain 168) protein is Proline--tRNA ligase.